Consider the following 435-residue polypeptide: GPI-anchor transamidase component PIGU (435 aa).

Residues 2-3 (AA) lie on the Cytoplasmic side of the membrane. Residues 4–22 (PLVLVLVVAVTVRAALFRS) form a helical membrane-spanning segment. The Lumenal portion of the chain corresponds to 23–78 (SLAEFISERVEVVSPLSSWKRVVEGLSLLDLGVSPYSGAVFHETPLIIYLFHFLID). The chain crosses the membrane as a helical span at residues 79-99 (YAELVFMITDALTAIALYFAI). At 100–136 (QDFNKVVFKKQKLLLELDQYAPDVAELIRTPMEMRYI) the chain is on the cytoplasmic side. 4 consecutive transmembrane segments (helical) span residues 137–158 (PLKVALFYLLNPYTILSCVAKS), 159–178 (TCAINNTLIAFFILTTIKGS), 179–194 (AFLSAIFLALATYQSL), and 195–205 (YPLTLFVPGLL). Residues 206-222 (YLLQRQYIPVKMKSKAF) are Cytoplasmic-facing. A cardiolipin contacts are provided by Lys216 and Met217. The helical transmembrane segment at 223–244 (WIFSWEYAMMYVGSLVVIICLS) threads the bilayer. Residues 245 to 286 (FFLLSSWDFIPAVYGFILSVPDLTPNIGLFWYFFAEMFEHFS) lie on the Lumenal side of the membrane. The helical transmembrane segment at 287–306 (LFFVCVFQINVFFYTIPLAI) threads the bilayer. The Cytoplasmic portion of the chain corresponds to 307-311 (KLKEH). Lys309 lines the a cardiolipin pocket. 2 helical membrane-spanning segments follow: residues 312–331 (PIFFMFIQIAVIAIFKSYPT) and 332–345 (VGDVALYMAFFPVW). Topologically, residues 346–354 (NHLYRFLRN) are cytoplasmic. The helical transmembrane segment at 355-372 (IFVLTCIIIVCSLLFPVL) threads the bilayer. The Lumenal segment spans residues 373–384 (WHLWIYAGSANS). Residues Asn383 and Asn385 each contribute to the a 2-acyl-6-[6-phosphoethanolamine-alpha-D-mannosyl-(1-&gt;2)-6-phosphoethanolamine-alpha-D-mannosyl-(1-&gt;6)-2-phosphoethanolamine-alpha-D-mannosyl-(1-&gt;4)-alpha-D-glucosaminyl]-1-(1-radyl,2-acyl-sn-glycero-3-phospho)-1D-myo-inositol site. A helical membrane pass occupies residues 385–406 (NFFYAITLTFNVGQILLISDYF). Over 407 to 435 (YAFLRREYYLTHGLYLTAKDGTEAMLVLK) the chain is Cytoplasmic.

This sequence belongs to the PIGU family. Heteropentamer. Part of the GPI-anchor transamidase complex, consisting of PIGK, PIGT, PIGS, PIGU and GAA1.

It localises to the endoplasmic reticulum membrane. It participates in glycolipid biosynthesis; glycosylphosphatidylinositol-anchor biosynthesis. Its function is as follows. Component of the glycosylphosphatidylinositol-anchor (GPI-anchor) transamidase (GPI-T) complex that catalyzes the formation of the linkage between a proprotein and a GPI-anchor and participates in GPI anchored protein biosynthesis. Binds the lipid portion of GPI-anchor. May act as an organizer in the transmembrane layer to recruit other subunits, and thus is essential for assembly of the complex. The chain is GPI-anchor transamidase component PIGU from Homo sapiens (Human).